The primary structure comprises 437 residues: Lipopolysaccharide biosynthesis protein RfbH (437 aa).

It belongs to the DegT/DnrJ/EryC1 family. Pyridoxal 5'-phosphate serves as cofactor.

It participates in bacterial outer membrane biogenesis; LPS O-antigen biosynthesis. The sequence is that of Lipopolysaccharide biosynthesis protein RfbH (rfbH) from Salmonella typhimurium (strain LT2 / SGSC1412 / ATCC 700720).